Reading from the N-terminus, the 243-residue chain is 5'-methylthioadenosine/S-adenosylhomocysteine nucleosidase (243 aa).

Glu-12 acts as the Proton acceptor in catalysis. Substrate is bound by residues Gly-78, Met-158, and 179-180; that span reads ME. Asp-203 serves as the catalytic Proton donor.

Belongs to the PNP/UDP phosphorylase family. MtnN subfamily.

It carries out the reaction S-adenosyl-L-homocysteine + H2O = S-(5-deoxy-D-ribos-5-yl)-L-homocysteine + adenine. The catalysed reaction is S-methyl-5'-thioadenosine + H2O = 5-(methylsulfanyl)-D-ribose + adenine. It catalyses the reaction 5'-deoxyadenosine + H2O = 5-deoxy-D-ribose + adenine. It functions in the pathway amino-acid biosynthesis; L-methionine biosynthesis via salvage pathway; S-methyl-5-thio-alpha-D-ribose 1-phosphate from S-methyl-5'-thioadenosine (hydrolase route): step 1/2. Catalyzes the irreversible cleavage of the glycosidic bond in both 5'-methylthioadenosine (MTA) and S-adenosylhomocysteine (SAH/AdoHcy) to adenine and the corresponding thioribose, 5'-methylthioribose and S-ribosylhomocysteine, respectively. Also cleaves 5'-deoxyadenosine, a toxic by-product of radical S-adenosylmethionine (SAM) enzymes, into 5-deoxyribose and adenine. The chain is 5'-methylthioadenosine/S-adenosylhomocysteine nucleosidase from Colwellia psychrerythraea (strain 34H / ATCC BAA-681) (Vibrio psychroerythus).